The sequence spans 388 residues: MDKLDANVSSEEGFGSVEKVVLLTFLSTVILMAILGNLLVMVAVCWDRQLRKIKTNYFIVSLAFADLLVSVLVMPFGAIELVQDIWIYGEVFCLVRTSLDVLLTTASIFHLCCISLDRYYAICCQPLVYRNKMTPLRIALMLGGCWVIPTFISFLPIMQGWNNIGIIDLIEKRKFNQNSNSTYCVFMVNKPYAITCSVVAFYIPFLLMVLAYYRIYVTAKEHAHQIQMLQRAGASSESRPQSADQHSTHRMRTETKAAKTLCIIMGCFCLCWAPFFVTNIVDPFIDYTVPGQVWTAFLWLGYINSGLNPFLYAFLNKSFRRAFLIILCCDDERYRRPSILGQTVPCSTTTINGSTHVLRDAVECGGQWESQCHPPATSPLVAAQPSDT.

The Extracellular portion of the chain corresponds to M1–K19. N-linked (GlcNAc...) asparagine glycosylation is present at N7. A helical membrane pass occupies residues V20 to V44. The Cytoplasmic segment spans residues C45–K54. Residues T55 to A78 traverse the membrane as a helical segment. At I79–F92 the chain is on the extracellular side. The helical transmembrane segment at C93–D117 threads the bilayer. C93 and C184 are oxidised to a cystine. D100 serves as a coordination point for serotonin. The Cytoplasmic portion of the chain corresponds to R118–M133. Residues T134–I157 traverse the membrane as a helical segment. At M158 to V188 the chain is on the extracellular side. The chain crosses the membrane as a helical span at residues N189–Y212. Residues Y213–A257 are Cytoplasmic-facing. The chain crosses the membrane as a helical span at residues A258–P283. N279 provides a ligand contact to serotonin. Topologically, residues F284–P290 are extracellular. The helical transmembrane segment at G291–F314 threads the bilayer. Over L315 to T388 the chain is Cytoplasmic.

This sequence belongs to the G-protein coupled receptor 1 family. In terms of assembly, interacts (via C-terminus 330-346 AA) with GRK5; this interaction is promoted by 5-HT (serotonin). Interacts with MAGI2, MPP3, NHERF1 and SNX27 isoforms 1 and 2. Forms a complex including NHERF1 and EZR. As to quaternary structure, interacts with PATJ, NOS1 and SEC23A. Expressed in ileum, brain, and atrium, but not in the ventricle. In terms of tissue distribution, mainly expressed in atria and cardiac ventricle. As to expression, expressed in all cardiovascular tissues analyzed.

It localises to the cell membrane. Its subcellular location is the endosome membrane. Functionally, G-protein coupled receptor for 5-hydroxytryptamine (serotonin), a biogenic hormone that functions as a neurotransmitter, a hormone and a mitogen. Ligand binding causes a conformation change that triggers signaling via guanine nucleotide-binding proteins (G proteins) and modulates the activity of downstream effectors. HTR4 is coupled to G(s) G alpha proteins and mediates activation of adenylate cyclase activity. The polypeptide is 5-hydroxytryptamine receptor 4 (Homo sapiens (Human)).